Here is a 171-residue protein sequence, read N- to C-terminus: MLP-like protein 31 (171 aa).

Belongs to the MLP family.

This chain is MLP-like protein 31 (MLP31), found in Arabidopsis thaliana (Mouse-ear cress).